The sequence spans 449 residues: Probable rhamnogalacturonase E (449 aa).

Positions 1-21 (MRSKTFSVLSSCLLLIATVQG) are cleaved as a signal peptide. Cys42 and Cys68 form a disulfide bridge. Asn53, Asn91, and Asn106 each carry an N-linked (GlcNAc...) asparagine glycan. Asp221 serves as the catalytic Proton donor. Cysteines 223 and 240 form a disulfide. Asn241 and Asn256 each carry an N-linked (GlcNAc...) asparagine glycan. His296 is a catalytic residue. Residue Asn323 is glycosylated (N-linked (GlcNAc...) asparagine). 2 cysteine pairs are disulfide-bonded: Cys346-Cys352 and Cys374-Cys383.

This sequence belongs to the glycosyl hydrolase 28 family.

It is found in the secreted. It catalyses the reaction Endohydrolysis of alpha-D-GalA-(1-&gt;2)-alpha-L-Rha glycosidic bond in the rhamnogalacturonan I backbone with initial inversion of anomeric configuration releasing oligosaccharides with beta-D-GalA at the reducing end.. Pectinolytic enzymes consist of four classes of enzymes: pectine lyase, polygalacturonase, pectin methylesterase and rhamnogalacturonase. Hydrolyzes alpha-D-galacturonopyranosyl-(1,2)-alpha-L-rhamnopyranosyl linkages in the backbone of the hairy regions of pectins. This is Probable rhamnogalacturonase E (rhgE) from Aspergillus flavus (strain ATCC 200026 / FGSC A1120 / IAM 13836 / NRRL 3357 / JCM 12722 / SRRC 167).